Reading from the N-terminus, the 147-residue chain is Large ribosomal subunit protein uL13 (147 aa).

It belongs to the universal ribosomal protein uL13 family. As to quaternary structure, part of the 50S ribosomal subunit.

Functionally, this protein is one of the early assembly proteins of the 50S ribosomal subunit, although it is not seen to bind rRNA by itself. It is important during the early stages of 50S assembly. In Streptomyces griseus subsp. griseus (strain JCM 4626 / CBS 651.72 / NBRC 13350 / KCC S-0626 / ISP 5235), this protein is Large ribosomal subunit protein uL13.